Reading from the N-terminus, the 699-residue chain is D-(-)-3-hydroxybutyrate oligomer hydrolase (699 aa).

A signal peptide spans 1 to 33 (MTAIRGGSRRAPGLALALLGGVLLGACHGDENA). Ser-311 acts as the Charge relay system in catalysis.

It belongs to the D-(-)-3-hydroxybutyrate oligomer hydrolase family.

The protein resides in the secreted. The catalysed reaction is (3R)-hydroxybutanoate dimer + H2O = 2 (R)-3-hydroxybutanoate + H(+). It participates in lipid metabolism; butanoate metabolism. In terms of biological role, participates in the degradation of poly-3-hydroxybutyrate (PHB). It works downstream of poly(3-hydroxybutyrate) depolymerase, hydrolyzing D(-)-3-hydroxybutyrate oligomers of various length (3HB-oligomers) into 3HB-monomers. The polypeptide is D-(-)-3-hydroxybutyrate oligomer hydrolase (Burkholderia pseudomallei (strain 1710b)).